Consider the following 95-residue polypeptide: Large ribosomal subunit protein bL27 (95 aa).

The propeptide occupies 1 to 10; the sequence is MRFILNLQFF.

This sequence belongs to the bacterial ribosomal protein bL27 family. Post-translationally, the N-terminus is cleaved by ribosomal processing cysteine protease Prp.

This chain is Large ribosomal subunit protein bL27, found in Mesoplasma florum (strain ATCC 33453 / NBRC 100688 / NCTC 11704 / L1) (Acholeplasma florum).